We begin with the raw amino-acid sequence, 348 residues long: MKATLAAPSSLTSLPYRTNSSFGSKSSLLFRSPSSSSSVSMTTTRGNVAVAAAATSTEALRKGIAEFYNETSGLWEEIWGDHMHHGFYDPDSSVQLSDSGHKEAQIRMIEESLRFAGVTDEEEEKKIKKVVDVGCGIGGSSRYLASKFGAECIGITLSPVQAKRANDLAAAQSLAHKASFQVADALDQPFEDGKFDLVWSMESGEHMPDKAKFVKELVRVAAPGGRIIIVTWCHRNLSAGEEALQPWEQNILDKICKTFYLPAWCSTDDYVNLLQSHSLQDIKCADWSENVAPFWPAVIRTALTWKGLVSLLRSGMKSIKGALTMPLMIEGYKKGVIKFGIITCQKPL.

The transit peptide at Met1 to Ala51 directs the protein to the chloroplast. Ala52 is modified (N-acetylalanine). Positions Val130–Gly139 are SAM motif I. Residues Gly193–Met201 are SAM motif II. An SAM motif III region spans residues Val220–Ile229.

Belongs to the class I-like SAM-binding methyltransferase superfamily. gTMT family.

The protein localises to the plastid. Its subcellular location is the chloroplast. The enzyme catalyses gamma-tocopherol + S-adenosyl-L-methionine = (+)-alpha-tocopherol + S-adenosyl-L-homocysteine + H(+). The catalysed reaction is delta-tocotrienol + S-adenosyl-L-methionine = beta-tocotrienol + S-adenosyl-L-homocysteine + H(+). It carries out the reaction gamma-tocotrienol + S-adenosyl-L-methionine = alpha-tocotrienol + S-adenosyl-L-homocysteine + H(+). It catalyses the reaction delta-tocopherol + S-adenosyl-L-methionine = beta-tocopherol + S-adenosyl-L-homocysteine + H(+). Its pathway is cofactor biosynthesis; tocopherol biosynthesis. In terms of biological role, involved in the synthesis of tocopherol (vitamin E). Methylates gamma- and delta-tocopherol to form beta- and alpha-tocopherol, respectively. The polypeptide is Tocopherol O-methyltransferase, chloroplastic (VTE4) (Arabidopsis thaliana (Mouse-ear cress)).